Here is a 218-residue protein sequence, read N- to C-terminus: Eukaryotic translation initiation factor 3 subunit K (218 aa).

The residue at position 2 (Ala-2) is an N-acetylalanine. Thr-28 bears the Phosphothreonine mark. The region spanning 42-204 (YDLEANLAVL…SIKPKNIVEK (163 aa)) is the PCI domain. Ser-217 carries the phosphoserine modification.

It belongs to the eIF-3 subunit K family. Component of the eukaryotic translation initiation factor 3 (eIF-3) complex, which is composed of 13 subunits: EIF3A, EIF3B, EIF3C, EIF3D, EIF3E, EIF3F, EIF3G, EIF3H, EIF3I, EIF3J, EIF3K, EIF3L and EIF3M. The eIF-3 complex appears to include 3 stable modules: module A is composed of EIF3A, EIF3B, EIF3G and EIF3I; module B is composed of EIF3F, EIF3H, and EIF3M; and module C is composed of EIF3C, EIF3D, EIF3E, EIF3K and EIF3L. EIF3C of module C binds EIF3B of module A and EIF3H of module B, thereby linking the three modules. EIF3J is a labile subunit that binds to the eIF-3 complex via EIF3B. The eIF-3 complex interacts with RPS6KB1 under conditions of nutrient depletion. Mitogenic stimulation leads to binding and activation of a complex composed of MTOR and RPTOR, leading to phosphorylation and release of RPS6KB1 and binding of EIF4B to eIF-3. Interacts with CCND3, but not with CCND1 and CCND2.

The protein localises to the nucleus. The protein resides in the cytoplasm. Its function is as follows. Component of the eukaryotic translation initiation factor 3 (eIF-3) complex, which is required for several steps in the initiation of protein synthesis. The eIF-3 complex associates with the 40S ribosome and facilitates the recruitment of eIF-1, eIF-1A, eIF-2:GTP:methionyl-tRNAi and eIF-5 to form the 43S pre-initiation complex (43S PIC). The eIF-3 complex stimulates mRNA recruitment to the 43S PIC and scanning of the mRNA for AUG recognition. The eIF-3 complex is also required for disassembly and recycling of post-termination ribosomal complexes and subsequently prevents premature joining of the 40S and 60S ribosomal subunits prior to initiation. The eIF-3 complex specifically targets and initiates translation of a subset of mRNAs involved in cell proliferation, including cell cycling, differentiation and apoptosis, and uses different modes of RNA stem-loop binding to exert either translational activation or repression. The protein is Eukaryotic translation initiation factor 3 subunit K of Bos taurus (Bovine).